We begin with the raw amino-acid sequence, 401 residues long: Mu-type opioid receptor (401 aa).

The Extracellular segment spans residues 1-69; sequence MDSSAVPANA…CPPTGSPSMI (69 aa). Asn-9, Asn-12, Asn-34, Asn-41, and Asn-49 each carry an N-linked (GlcNAc...) asparagine glycan. A helical transmembrane segment spans residues 70–94; it reads TAITIMALYSIVCVVGLFGNFLVMY. Residues 95–107 lie on the Cytoplasmic side of the membrane; that stretch reads VIVRYTKMKTATN. The chain crosses the membrane as a helical span at residues 108–132; that stretch reads IYIFNLALADALATSTLPFQSVNYL. The Extracellular portion of the chain corresponds to 133 to 143; it reads MGTWPFGTILC. Cys-143 and Cys-220 are joined by a disulfide. The chain crosses the membrane as a helical span at residues 144–166; sequence KIVISIDYYNMFTSIFTLCTMSV. Residues 167–186 are Cytoplasmic-facing; it reads DRYIAVCHPVKALDFRTPRN. The residue at position 169 (Tyr-169) is a Phosphotyrosine. The chain crosses the membrane as a helical span at residues 187 to 208; that stretch reads AKIINVCNWILSSAIGLPVMFM. At 209–231 the chain is on the extracellular side; it reads ATTKYRHGSIDCTLTFSHPTWYW. The chain crosses the membrane as a helical span at residues 232–256; it reads ENLLKICVFIFAFIMPVLIITVCYG. Over 257–280 the chain is Cytoplasmic; that stretch reads LMILRLKSVRMLSGSKEKDRNLRR. Residues 281 to 307 traverse the membrane as a helical segment; sequence ITRMVLVVVAVFIVCWTPIHIYVIIKA. Residues 308 to 315 lie on the Extracellular side of the membrane; it reads LVTIPETT. A helical transmembrane segment spans residues 316–339; that stretch reads FQTVSWHFCIALGYTNSCLNPVLY. The NPxxY; plays a role in stabilizing the activated conformation of the receptor signature appears at 335 to 339; that stretch reads NPVLY. Residues 340 to 401 lie on the Cytoplasmic side of the membrane; the sequence is AFLDENFKRC…NLEAETAPLP (62 aa). The S-palmitoyl cysteine moiety is linked to residue Cys-354. The interval 365–388 is disordered; that stretch reads NSTRIRQNTRDHPSTANTVDRTNH. Ser-366 is modified (phosphoserine). Residue Thr-373 is modified to Phosphothreonine. At Ser-378 the chain carries Phosphoserine. Residue Thr-397 is modified to Phosphothreonine.

It belongs to the G-protein coupled receptor 1 family. In terms of assembly, forms homooligomers and heterooligomers with other GPCRs, such as OPRD1, OPRK1, OPRL1, NPFFR2, ADRA2A, SSTR2, CNR1 and CCR5 (probably in dimeric forms). Interacts with heterotrimeric G proteins; interaction with a heterotrimeric complex containing GNAI1, GNB1 and GNG2 stabilizes the active conformation of the receptor and increases its affinity for endomorphin-2, the synthetic opioid peptide DAMGO and for morphinan agonists. Interacts with PPL; the interaction disrupts agonist-mediated G-protein activation. Interacts (via C-terminus) with DNAJB4 (via C-terminus). Interacts with calmodulin; the interaction inhibits the constitutive activity of OPRM1; it abolishes basal and attenuates agonist-stimulated G-protein coupling. Interacts with FLNA, PLD2, RANBP9 and WLS and GPM6A. Interacts with RTP4. Interacts with SYP and GNAS. Interacts with RGS9, RGS17, RGS20, RGS4, PPP1R9B and HINT1. In terms of processing, phosphorylated. Differentially phosphorylated in basal and agonist-induced conditions. Agonist-mediated phosphorylation modulates receptor internalization. Phosphorylated by GRK2 in a agonist-dependent manner. Phosphorylation at Tyr-169 requires receptor activation, is dependent on non-receptor protein tyrosine kinase Src and results in a decrease in agonist efficacy by reducing G-protein coupling efficiency. Phosphorylated on tyrosine residues; the phosphorylation is involved in agonist-induced G-protein-independent receptor down-regulation. Phosphorylation at Ser-378 is involved in G-protein-dependent but not beta-arrestin-dependent activation of the ERK pathway. Post-translationally, ubiquitinated. A basal ubiquitination seems not to be related to degradation. Ubiquitination is increased upon formation of OPRM1:OPRD1 oligomers leading to proteasomal degradation; the ubiquitination is diminished by RTP4.

It is found in the cell membrane. The protein resides in the cell projection. The protein localises to the axon. Its subcellular location is the perikaryon. It localises to the dendrite. It is found in the endosome. Its function is as follows. Receptor for endogenous opioids such as beta-endorphin and endomorphin. Receptor for natural and synthetic opioids including morphine, heroin, DAMGO, fentanyl, etorphine, buprenorphin and methadone. Also activated by enkephalin peptides, such as Met-enkephalin or Met-enkephalin-Arg-Phe, with higher affinity for Met-enkephalin-Arg-Phe. Agonist binding to the receptor induces coupling to an inactive GDP-bound heterotrimeric G-protein complex and subsequent exchange of GDP for GTP in the G-protein alpha subunit leading to dissociation of the G-protein complex with the free GTP-bound G-protein alpha and the G-protein beta-gamma dimer activating downstream cellular effectors. The agonist- and cell type-specific activity is predominantly coupled to pertussis toxin-sensitive G(i) and G(o) G alpha proteins, GNAI1, GNAI2, GNAI3 and GNAO1, and to a lesser extent to pertussis toxin-insensitive G alpha proteins GNAZ and GNA15. They mediate an array of downstream cellular responses, including inhibition of adenylate cyclase activity and both N-type and L-type calcium channels, activation of inward rectifying potassium channels, mitogen-activated protein kinase (MAPK), phospholipase C (PLC), phosphoinositide/protein kinase (PKC), phosphoinositide 3-kinase (PI3K) and regulation of NF-kappa-B. Also couples to adenylate cyclase stimulatory G alpha proteins. The selective temporal coupling to G-proteins and subsequent signaling can be regulated by RGSZ proteins, such as RGS9, RGS17 and RGS4. Phosphorylation by members of the GPRK subfamily of Ser/Thr protein kinases and association with beta-arrestins is involved in short-term receptor desensitization. Beta-arrestins associate with the GPRK-phosphorylated receptor and uncouple it from the G-protein thus terminating signal transduction. The phosphorylated receptor is internalized through endocytosis via clathrin-coated pits which involves beta-arrestins. The activation of the ERK pathway occurs either in a G-protein-dependent or a beta-arrestin-dependent manner and is regulated by agonist-specific receptor phosphorylation. Acts as a class A G-protein coupled receptor (GPCR) which dissociates from beta-arrestin at or near the plasma membrane and undergoes rapid recycling. Receptor down-regulation pathways are varying with the agonist and occur dependent or independent of G-protein coupling. Endogenous ligands induce rapid desensitization, endocytosis and recycling. Heterooligomerization with other GPCRs can modulate agonist binding, signaling and trafficking properties. Involved in neurogenesis. This is Mu-type opioid receptor (OPRM1) from Pan troglodytes (Chimpanzee).